Consider the following 313-residue polypeptide: GTP cyclohydrolase MptA (313 aa).

Belongs to the GTP cyclohydrolase IV family. In terms of assembly, homodimer. It depends on Fe(2+) as a cofactor.

The enzyme catalyses GTP + H2O = 7,8-dihydroneopterin 2',3'-cyclic phosphate + formate + diphosphate + H(+). It functions in the pathway cofactor biosynthesis; 5,6,7,8-tetrahydromethanopterin biosynthesis. Functionally, converts GTP to 7,8-dihydro-D-neopterin 2',3'-cyclic phosphate, the first intermediate in the biosynthesis of coenzyme methanopterin. The protein is GTP cyclohydrolase MptA of Methanoculleus marisnigri (strain ATCC 35101 / DSM 1498 / JR1).